The primary structure comprises 180 residues: Negative modulator of initiation of replication (180 aa).

Residues 87–88 (AV) are interaction with DNA.

Belongs to the SeqA family. Homodimer. Polymerizes to form helical filaments.

It localises to the cytoplasm. In terms of biological role, negative regulator of replication initiation, which contributes to regulation of DNA replication and ensures that replication initiation occurs exactly once per chromosome per cell cycle. Binds to pairs of hemimethylated GATC sequences in the oriC region, thus preventing assembly of replication proteins and re-initiation at newly replicated origins. Repression is relieved when the region becomes fully methylated. The sequence is that of Negative modulator of initiation of replication from Ferrimonas balearica (strain DSM 9799 / CCM 4581 / KCTC 23876 / PAT).